We begin with the raw amino-acid sequence, 220 residues long: ATP phosphoribosyltransferase (220 aa).

It belongs to the ATP phosphoribosyltransferase family. Short subfamily. Heteromultimer composed of HisG and HisZ subunits.

It is found in the cytoplasm. The catalysed reaction is 1-(5-phospho-beta-D-ribosyl)-ATP + diphosphate = 5-phospho-alpha-D-ribose 1-diphosphate + ATP. The protein operates within amino-acid biosynthesis; L-histidine biosynthesis; L-histidine from 5-phospho-alpha-D-ribose 1-diphosphate: step 1/9. Functionally, catalyzes the condensation of ATP and 5-phosphoribose 1-diphosphate to form N'-(5'-phosphoribosyl)-ATP (PR-ATP). Has a crucial role in the pathway because the rate of histidine biosynthesis seems to be controlled primarily by regulation of HisG enzymatic activity. The sequence is that of ATP phosphoribosyltransferase from Anaeromyxobacter sp. (strain Fw109-5).